The sequence spans 579 residues: Glypican-2 (579 aa).

An N-terminal signal peptide occupies residues 1–21 (MSALRPLLLLLLHLCPGLGPG). O-linked (Xyl...) (heparan sulfate) serine glycosylation is found at serine 55, serine 92, and serine 155. Disordered stretches follow at residues 347-382 (GTPH…PTTA) and 483-552 (ALGQ…GRSR). Residues 361–379 (APREEASRSWRASAEEERP) show a composition bias toward basic and acidic residues. Residues serine 498 and serine 500 are each glycosylated (O-linked (Xyl...) (heparan sulfate) serine). The span at 517–527 (VVPPARPPRPP) shows a compositional bias: pro residues. Residue serine 556 is the site of GPI-anchor amidated serine attachment. Positions 557-579 (SVGLHTPLVLLLLPSALTLLVLR) are cleaved as a propeptide — removed in mature form.

It belongs to the glypican family. In terms of assembly, interacts (via heparan sulfate) with PTN; this interaction promotes neurite outgrowth through binding of PTN with chondroitin sulfate of proteoglycans, thereby releasing PTPRS of chondroitin sulfate proteoglycans (CSPGs) and leading to binding with heparan sulfate of GPC2. Interacts (heparan sulfate chain) with MDK; this interaction is inhibited by heparin followed by chondroitin sulfate E; this interaction induces GPC2 clustering through heparan sulfate chain; this interaction induces neuronal cell adhesion and neurite outgrowth.

The protein localises to the cell membrane. The protein resides in the secreted. It localises to the extracellular space. Its function is as follows. Cell surface proteoglycan that bears heparan sulfate. May fulfill a function related to the motile behaviors of developing neurons. The chain is Glypican-2 (Gpc2) from Mus musculus (Mouse).